The chain runs to 679 residues: Methionine--tRNA ligase (679 aa).

Zn(2+) contacts are provided by C147, C150, C160, and C163. The short motif at 332–336 (KISTS) is the 'KMSKS' region element. T335 serves as a coordination point for ATP. A tRNA-binding domain is found at 578-679 (DFMKLDIRVG…REVKPGSEVK (102 aa)).

Belongs to the class-I aminoacyl-tRNA synthetase family. MetG type 1 subfamily. As to quaternary structure, homodimer. Zn(2+) serves as cofactor.

The protein resides in the cytoplasm. It catalyses the reaction tRNA(Met) + L-methionine + ATP = L-methionyl-tRNA(Met) + AMP + diphosphate. Functionally, is required not only for elongation of protein synthesis but also for the initiation of all mRNA translation through initiator tRNA(fMet) aminoacylation. The sequence is that of Methionine--tRNA ligase from Bacteroides fragilis (strain YCH46).